The primary structure comprises 406 residues: GTPase Obg (406 aa).

An Obg domain is found at 1-159; it reads MRFVDEAVIT…REIRLELKVL (159 aa). A disordered region spans residues 120–143; sequence GGEGGLGNTHFKSSTNRAPRKCTT. The region spanning 160-333 is the OBG-type G domain; that stretch reads ADVGLLGMPN…VVYYLMDQIE (174 aa). GTP-binding positions include 166–173, 191–195, 213–216, 283–286, and 314–316; these read GMPNAGKS, FTTMV, DIPG, NKLD, and SGL. S173 and T193 together coordinate Mg(2+). The tract at residues 381–406 is disordered; it reads ESMMDDDDDFDDDEDDGDVESIYVRD. A compositionally biased stretch (acidic residues) spans 383–399; sequence MMDDDDDFDDDEDDGDV.

This sequence belongs to the TRAFAC class OBG-HflX-like GTPase superfamily. OBG GTPase family. As to quaternary structure, monomer. Mg(2+) serves as cofactor.

It is found in the cytoplasm. Functionally, an essential GTPase which binds GTP, GDP and possibly (p)ppGpp with moderate affinity, with high nucleotide exchange rates and a fairly low GTP hydrolysis rate. Plays a role in control of the cell cycle, stress response, ribosome biogenesis and in those bacteria that undergo differentiation, in morphogenesis control. This is GTPase Obg from Acinetobacter baumannii (strain SDF).